Reading from the N-terminus, the 130-residue chain is Con-Ins M1 (130 aa).

The signal sequence occupies residues 1 to 21; sequence MTTSSYFLLVALGLLLYVCQS. 4 disulfides stabilise this stretch: Cys-29–Cys-107, Cys-41–Cys-110, Cys-53–Cys-123, and Cys-109–Cys-114. Pro-34 carries the post-translational modification 4-hydroxyproline; partial. Residues 59 to 92 constitute a propeptide, c peptide; the sequence is AHGGTNDARATTGRALSLSKRRGFLSMLKRRGKR. Glu-118 carries the post-translational modification 4-carboxyglutamate; partial. Ser-129 is subject to Serine amide.

It belongs to the insulin family. As to quaternary structure, heterodimer of A and B chains; disulfide-linked. Expressed by the venom gland.

It localises to the secreted. This venom insulin facilitates prey capture by rapidly inducing hypoglycemic shock. Intraperitoneal injection of this peptide into zebrafish lowers blood glucose with the same potency than human insulin. In vivo, when applied to water, this peptide reduces overall locomotor activity of zebrafish larvae, observed as a significant decrease in the percentage of time spent swimming and movement frequency. The sequence is that of Con-Ins M1 from Conus marmoreus (Marble cone).